The chain runs to 156 residues: MPVEVIPVLHNVSSVQRVVDMARLSYSLGLDTLVVTKAYGGAAQSGVPEAMRLALKLGKSLVVLPELRDAVNLLSPTHVLAVTPSRAERLVGPGGLEGLEGRVLVVFSGGEPELDPSEAAGAIRVYIEGVEGKVGPIAEAALILYFLLRGGGDGRG.

To M.jannaschii MJ1199.

The catalysed reaction is Endonucleolytic cleavage of DNA to give specific double-stranded fragments with terminal 5'-phosphates.. Its function is as follows. A putative type II restriction enzyme, its methylase would be APE_2002. The sequence is that of Putative type II restriction enzyme ApeKORF2002P from Aeropyrum pernix (strain ATCC 700893 / DSM 11879 / JCM 9820 / NBRC 100138 / K1).